Reading from the N-terminus, the 861-residue chain is Leucine--tRNA ligase (861 aa).

The 'HIGH' region signature appears at 42–52 (PYPSGKLHMGH). A 'KMSKS' region motif is present at residues 620 to 624 (KMSKS). Lys-623 contacts ATP.

This sequence belongs to the class-I aminoacyl-tRNA synthetase family.

It localises to the cytoplasm. The catalysed reaction is tRNA(Leu) + L-leucine + ATP = L-leucyl-tRNA(Leu) + AMP + diphosphate. The polypeptide is Leucine--tRNA ligase (Buchnera aphidicola subsp. Schizaphis graminum (strain Sg)).